Reading from the N-terminus, the 279-residue chain is Elongation factor Ts (279 aa).

The interval 79–82 is involved in Mg(2+) ion dislocation from EF-Tu; sequence TDFV.

It belongs to the EF-Ts family.

Its subcellular location is the cytoplasm. Functionally, associates with the EF-Tu.GDP complex and induces the exchange of GDP to GTP. It remains bound to the aminoacyl-tRNA.EF-Tu.GTP complex up to the GTP hydrolysis stage on the ribosome. In Phytoplasma mali (strain AT), this protein is Elongation factor Ts.